The sequence spans 393 residues: Acetylornithine aminotransferase (393 aa).

Pyridoxal 5'-phosphate is bound by residues 100-101 and Phe132; that span reads GT. Arg135 serves as a coordination point for N(2)-acetyl-L-ornithine. 217-220 provides a ligand contact to pyridoxal 5'-phosphate; it reads DEIQ. Lys246 carries the post-translational modification N6-(pyridoxal phosphate)lysine. Ser275 contacts N(2)-acetyl-L-ornithine. Residue Thr276 participates in pyridoxal 5'-phosphate binding.

It belongs to the class-III pyridoxal-phosphate-dependent aminotransferase family. ArgD subfamily. In terms of assembly, homodimer. Pyridoxal 5'-phosphate is required as a cofactor.

It is found in the cytoplasm. It catalyses the reaction N(2)-acetyl-L-ornithine + 2-oxoglutarate = N-acetyl-L-glutamate 5-semialdehyde + L-glutamate. Its pathway is amino-acid biosynthesis; L-arginine biosynthesis; N(2)-acetyl-L-ornithine from L-glutamate: step 4/4. The protein is Acetylornithine aminotransferase of Campylobacter jejuni subsp. jejuni serotype O:2 (strain ATCC 700819 / NCTC 11168).